We begin with the raw amino-acid sequence, 634 residues long: NRPS-independent siderophore synthetase rfs (634 aa).

Functionally, NRPS-independent siderophore synthetase that catalyzes the rhizoferrin biosynthesis from citrate and diaminobutane via an ATP-dependent condensation of citrate with diaminobutane followed by the addition of a second citrate to the monocitryl-diaminobutane intermediate. Can also use as substrates the citrate and diaminobutane homologs oxaloacetic acid, diaminopropane, diaminobutane, diaminopentane, tricarballylic acid, hydroxylamine and ornithine. Forms only a mono-substituted intermediate with oxaloacetic acid and diaminopentane whereas both mono-citryl intermediates and full rhizoferrin derivatives were detected when diaminopropane, and ornithine were used as substrates. Tricarballylic acid only forms a rhizoferrin derivative, but no mono-substituted intermediate. This chain is NRPS-independent siderophore synthetase rfs, found in Rhizopus delemar (strain RA 99-880 / ATCC MYA-4621 / FGSC 9543 / NRRL 43880) (Mucormycosis agent).